We begin with the raw amino-acid sequence, 1512 residues long: MSVNISTAGKGVDPNTVDTYDSGDDWEIGVGNLIIDLDADLEKDRQKFEMNNSTTTTSSSNSKDCGGPASSGAGATAALADGLKFASVQASAPQGNSHKETSKSKVKRSKTSKDANKSLPSAALYGIPEISSTGKRQEVQGRPGEATGMNSALGQSVSSGGSGNPNSNSTSTSTSAATAGAGSCGKSKEEKPGKSQSSRGAKRDKDAGKSRKDKHDLLQGHQNGSGSQAPSGGHLYGFGAKSNGGGASPFHCGGTGSGSVAAAGEVSKSAPDSGLMGNSMLVKKEEEEEESHRRIKKLKTEKVDPLFTVPAPPPPISSSLTPQILPSYFSPSSSNIAAPVEQLLVRTRSVGVNTCEVGVVTEPECLGPCEPGTSVNLEGIVWHETEEGVLVVNVTWRNKTYVGTLLDCTKHDWAPPRFCESPTSDLEMRGGRGRGKRARSAAAAPGSEASFTESRGLQNKNRGGANGKGRRGSLNASGRRTPPNCAAEDIKASPSSTNKRKNKPPMELDLNSSSEDNKPGKRVRTNSRSTPTTPQGKPETTFLDQGCSSPVLIDCPHPNCNKKYKHINGLRYHQAHAHLDPENKLEFEPDSEDKISDCEEGLSNVALECSEPSTSVSAYDQLKAPASPGAGNPPGTPKGKRELMSNGPGSIIGAKAGKNSGKKKGLNNELNNLPVISNMTAALDSCSAADGSLAAEMPKLEAEGLIDKKNLGDKEKGKKATNCKTDKNLSKLKSARPIAPAPAPTPPQLIAIPTATFTTTTTGTIPGLPSLTTTVVQATPKSPPLKPIQPKPTIMGEPITVNPALVSLKDKKKKEKRKLKDKEGKETGSPKMDAKLGKLEDSKGASKDLPGHFLKDHLNKNEGLANGLSESQESRMASIKAEADKVYTFTDNAPSPSIGSASRLECSTLVNGQAPMAPLHVLTQNGAESSAAKTSSPAYSDISDAADDGGSDSRSEGMRSKASSPSDIISSKDSVVKGHSSTTAQSSQLKESHSPYYHSYDPYYSPSYMHPGQVGAPAAGNSGSTQGMKIKKESEEDAEKKDKAEQLDSKKVDHNSASLQPQHQSVITQRHPALAQSLYYGQYAYGLYMDQKSLMATSPAYRQQYEKYYEDQRLAEQKMAQTGRGDCERKSELPLKELGKEETKQKNMPSATISKAPSTPEPNKNHSKLGPSVPNKTEETGKSQLLSNHQQQLQADSFKAKQMENHQLIKEAVEMKSVMDSMKQTGVDPTSRFKQDPDSRTWHHYVYQPKYLDQQKSEELDREKKLKEDSPRKTPNKESGVPSLPVSLTSIKEEPKEAKHPDSQSMEESKLKNDDRKTPVNWKDSRGTRVAVSSPMSQHQSYIQYLHAYPYPQMYDPSHPAYRAVSPVLMHSYPGAYLSPGFHYPVYGKMSGREETEKVNTSPSVNTKTTTESKALDLLQQHANQYRSKSPAPVEKATAEREREAERERDRHSPFGQRHLHTHHHTHVGMGYPLIPGQYDPFQGLTSAALVASQQVAAQASASGMFPGQRRE.

Disordered stretches follow at residues 1-23 (MSVN…YDSG), 46-74 (QKFE…SGAG), 89-237 (QASA…HLYG), 260-295 (VAAA…HRRI), and 417-545 (RFCE…FLDQ). Low complexity-rich tracts occupy residues 51–74 (NNST…SGAG) and 151–185 (SALG…GSCG). Basic and acidic residues predominate over residues 201–218 (AKRDKDAGKSRKDKHDLL). The span at 220-230 (GHQNGSGSQAP) shows a compositional bias: polar residues. Low complexity predominate over residues 260–270 (VAAAGEVSKSA). The stretch at 278-304 (NSMLVKKEEEEEESHRRIKKLKTEKVD) forms a coiled coil. Lys283 participates in a covalent cross-link: Glycyl lysine isopeptide (Lys-Gly) (interchain with G-Cter in SUMO2). A phosphoserine mark is found at Ser421 and Ser424. The span at 449–458 (ASFTESRGLQ) shows a compositional bias: polar residues. Thr481 bears the Phosphothreonine mark. The residue at position 493 (Ser493) is a Phosphoserine. A compositionally biased stretch (polar residues) spans 526–535 (NSRSTPTTPQ). The segment at 553–578 (IDCPHPNCNKKYKHINGLRYHQAHAH) adopts a C2H2-type zinc-finger fold. Disordered stretches follow at residues 622–665 (LKAP…KKKG), 713–750 (DKEK…PQLI), and 777–858 (QATP…KDHL). A Phosphoserine modification is found at Ser627. Residues 713–729 (DKEKGKKATNCKTDKNL) are compositionally biased toward basic and acidic residues. A compositionally biased stretch (pro residues) spans 781–790 (KSPPLKPIQP). Ser782 is modified (phosphoserine). A compositionally biased stretch (basic and acidic residues) spans 818–858 (KLKDKEGKETGSPKMDAKLGKLEDSKGASKDLPGHFLKDHL). Residue Lys880 forms a Glycyl lysine isopeptide (Lys-Gly) (interchain with G-Cter in SUMO2) linkage. Ser895 carries the phosphoserine modification. Polar residues predominate over residues 925 to 934 (NGAESSAAKT). 2 disordered regions span residues 925–996 (NGAE…HSPY) and 1011–1066 (PGQV…HQSV). Residues 960-973 (SKASSPSDIISSKD) show a composition bias toward low complexity. Phosphoserine is present on Ser964. Positions 979 to 989 (HSSTTAQSSQL) are enriched in polar residues. Over residues 1030-1054 (IKKESEEDAEKKDKAEQLDSKKVDH) the composition is skewed to basic and acidic residues. Positions 1055–1066 (NSASLQPQHQSV) are enriched in polar residues. Ser1098 carries the post-translational modification Phosphoserine. A disordered region spans residues 1117 to 1192 (QKMAQTGRGD…SQLLSNHQQQ (76 aa)). A Glycyl lysine isopeptide (Lys-Gly) (interchain with G-Cter in SUMO2) cross-link involves residue Lys1118. A compositionally biased stretch (basic and acidic residues) spans 1125–1145 (GDCERKSELPLKELGKEETKQ). The segment covering 1146 to 1157 (KNMPSATISKAP) has biased composition (polar residues). Residues Lys1176 and Lys1182 each participate in a glycyl lysine isopeptide (Lys-Gly) (interchain with G-Cter in SUMO2) cross-link. Residues 1183–1192 (SQLLSNHQQQ) show a composition bias toward low complexity. Residues Lys1199, Lys1216, Lys1234, and Lys1250 each participate in a glycyl lysine isopeptide (Lys-Gly) (interchain with G-Cter in SUMO2) cross-link. Residues 1220–1335 (DSMKQTGVDP…RGTRVAVSSP (116 aa)) form a disordered region. Residues 1231–1241 (SRFKQDPDSRT) are compositionally biased toward basic and acidic residues. Composition is skewed to basic and acidic residues over residues 1253 to 1276 (DQQK…KTPN) and 1291 to 1327 (IKEE…DSRG). Glycyl lysine isopeptide (Lys-Gly) (interchain with G-Cter in SUMO2) cross-links involve residues Lys1292, Lys1310, and Lys1414. Positions 1423-1459 (ANQYRSKSPAPVEKATAEREREAERERDRHSPFGQRH) are disordered. The span at 1437 to 1453 (ATAEREREAERERDRHS) shows a compositional bias: basic and acidic residues.

Its function is as follows. Transcription factor, which represses ZNF609 transcription. The sequence is that of Zinc finger protein 608 (ZNF608) from Homo sapiens (Human).